Here is a 287-residue protein sequence, read N- to C-terminus: Undecaprenyl-diphosphatase (287 aa).

7 helical membrane passes run 6–26, 45–65, 85–105, 111–131, 204–224, 238–258, and 265–285; these read LYLI…FIPV, SGKV…MWIF, AFTR…AIFI, VFYH…IMLW, ATEF…TYDL, AIAV…RAVL, and TYRG…AWLM.

This sequence belongs to the UppP family.

The protein resides in the cell inner membrane. The enzyme catalyses di-trans,octa-cis-undecaprenyl diphosphate + H2O = di-trans,octa-cis-undecaprenyl phosphate + phosphate + H(+). Catalyzes the dephosphorylation of undecaprenyl diphosphate (UPP). Confers resistance to bacitracin. This chain is Undecaprenyl-diphosphatase, found in Bordetella petrii (strain ATCC BAA-461 / DSM 12804 / CCUG 43448).